A 66-amino-acid polypeptide reads, in one-letter code: Large ribosomal subunit protein bL35 (66 aa).

A disordered region spans residues methionine 1–histidine 26.

It belongs to the bacterial ribosomal protein bL35 family.

In Bacillus anthracis, this protein is Large ribosomal subunit protein bL35.